The chain runs to 70 residues: DNA gyrase inhibitor YacG (70 aa).

The Zn(2+) site is built by C20, C23, C35, and C39.

The protein belongs to the DNA gyrase inhibitor YacG family. In terms of assembly, interacts with GyrB. Requires Zn(2+) as cofactor.

Its function is as follows. Inhibits all the catalytic activities of DNA gyrase by preventing its interaction with DNA. Acts by binding directly to the C-terminal domain of GyrB, which probably disrupts DNA binding by the gyrase. This chain is DNA gyrase inhibitor YacG, found in Rhizobium leguminosarum bv. trifolii (strain WSM2304).